The chain runs to 87 residues: Large ribosomal subunit protein bL31B (87 aa).

Belongs to the bacterial ribosomal protein bL31 family. Type B subfamily. As to quaternary structure, part of the 50S ribosomal subunit.

In Burkholderia thailandensis (strain ATCC 700388 / DSM 13276 / CCUG 48851 / CIP 106301 / E264), this protein is Large ribosomal subunit protein bL31B.